A 357-amino-acid chain; its full sequence is Decorin (357 aa).

The first 16 residues, 1 to 16 (MRLVLLFVLLLPVCLA), serve as a signal peptide directing secretion. The propeptide occupies 17-30 (TRFHQKGLFDFMIE). O-linked (Xyl...) (glycosaminoglycan) serine glycosylation occurs at Ser-46. Disulfide bonds link Cys-52-Cys-58 and Cys-56-Cys-65. LRR repeat units follow at residues 71–91 (ERVPKDLPPDTTLLDLQNNKI), 92–115 (TEIKEGDFKNLKNLHALILVNNKI), 116–139 (SKISPAAFAPLKKLERLYLSKNNL), 140–160 (KELPENMPKSLQEIRAHENEI), 161–184 (SKLRKAVFNGLNQVIVLELGTNPL), 185–210 (KSSGIENGAFQGMKRLSYIRIADTNI), 211–231 (TSIPKGLPPSLTELHLDGNKI), 232–255 (SKIDAEGLSGLTNLAKLGLSFNSI), 256–279 (SSVENGSLNNVPHLRELHLNNNEL), 280–302 (VRVPSGLGEHKYIQVVYLHNNKI), 303–332 (ASIGINDFCPLGYNTKKATYSGVSLFSNPV), and 333–357 (QYWEIQPSAFRCIHERSAVQIGNYK). Residue Asn-209 is glycosylated (N-linked (GlcNAc...) asparagine). The N-linked (GlcNAc...) asparagine glycan is linked to Asn-260. Residues Cys-311 and Cys-344 are joined by a disulfide bond.

This sequence belongs to the small leucine-rich proteoglycan (SLRP) family. SLRP class I subfamily. In terms of assembly, binds to type I and type II collagen, to fibronectin and TGF-beta. Forms a ternary complex with MFAP2 and ELN. The attached glycosaminoglycan chain can be either chondroitin sulfate or dermatan sulfate depending upon the tissue of origin.

Its subcellular location is the secreted. The protein localises to the extracellular space. The protein resides in the extracellular matrix. In terms of biological role, may affect the rate of fibrils formation. The chain is Decorin (DCN) from Gallus gallus (Chicken).